The primary structure comprises 358 residues: tRNA N6-adenosine threonylcarbamoyltransferase (358 aa).

The Fe cation site is built by His118 and His122. Substrate contacts are provided by residues 143-147 (IVSGG), Asp176, Gly189, and Asn298. Residue Asp326 coordinates Fe cation.

This sequence belongs to the KAE1 / TsaD family. Fe(2+) serves as cofactor.

It localises to the cytoplasm. The catalysed reaction is L-threonylcarbamoyladenylate + adenosine(37) in tRNA = N(6)-L-threonylcarbamoyladenosine(37) in tRNA + AMP + H(+). Its function is as follows. Required for the formation of a threonylcarbamoyl group on adenosine at position 37 (t(6)A37) in tRNAs that read codons beginning with adenine. Is involved in the transfer of the threonylcarbamoyl moiety of threonylcarbamoyl-AMP (TC-AMP) to the N6 group of A37, together with TsaE and TsaB. TsaD likely plays a direct catalytic role in this reaction. The sequence is that of tRNA N6-adenosine threonylcarbamoyltransferase from Rhodopirellula baltica (strain DSM 10527 / NCIMB 13988 / SH1).